We begin with the raw amino-acid sequence, 679 residues long: Methionine--tRNA ligase (679 aa).

The 'HIGH' region signature appears at 15-25 (PYANGPIHLGH). 4 residues coordinate Zn(2+): C146, C149, C159, and C162. The 'KMSKS' region motif lies at 332 to 336 (KMSKS). Residue K335 participates in ATP binding. The 102-residue stretch at 578–679 (DFAKIDLRIA…EGAQPGMKVK (102 aa)) folds into the tRNA-binding domain.

The protein belongs to the class-I aminoacyl-tRNA synthetase family. MetG type 1 subfamily. Homodimer. Zn(2+) is required as a cofactor.

The protein resides in the cytoplasm. It catalyses the reaction tRNA(Met) + L-methionine + ATP = L-methionyl-tRNA(Met) + AMP + diphosphate. Is required not only for elongation of protein synthesis but also for the initiation of all mRNA translation through initiator tRNA(fMet) aminoacylation. The sequence is that of Methionine--tRNA ligase from Shewanella halifaxensis (strain HAW-EB4).